The primary structure comprises 147 residues: Putative pre-16S rRNA nuclease (147 aa).

This sequence belongs to the YqgF nuclease family.

It localises to the cytoplasm. Could be a nuclease involved in processing of the 5'-end of pre-16S rRNA. The protein is Putative pre-16S rRNA nuclease of Limosilactobacillus reuteri (strain DSM 20016) (Lactobacillus reuteri).